We begin with the raw amino-acid sequence, 444 residues long: Type VII secretion system protein EssB (444 aa).

Topologically, residues 1 to 229 (MVKNHDPKNE…RKVGHTVFKW (229 aa)) are cytoplasmic. Residues 230 to 250 (VAIGMTTLSVLLIAFLAFLYF) traverse the membrane as a helical segment. Topologically, residues 251–444 (SVMKHNERIE…EKRQEAERKK (194 aa)) are extracellular. The tract at residues 366–444 (KNNGDLSNDK…EKRQEAERKK (79 aa)) is disordered. The segment covering 372–444 (SNDKRSEETK…EKRQEAERKK (73 aa)) has biased composition (basic and acidic residues). Residues 387–443 (LQDILDKEKQVKDEKAKSEEEKAKAKDEKLKQQEENEKKQKEQAQKDKEKRQEAERK) adopt a coiled-coil conformation.

The protein belongs to the EssB family.

The protein localises to the cell membrane. In terms of biological role, component of the type VII secretion system (Ess). Required for the secretion of EsxA. The sequence is that of Type VII secretion system protein EssB from Staphylococcus aureus (strain MRSA252).